The primary structure comprises 352 residues: Rhodopsin (352 aa).

At Met-1–Ala-36 the chain is on the extracellular side. N-linked (GlcNAc...) asparagine glycosylation is found at Asn-2 and Asn-15. The chain crosses the membrane as a helical span at residues Tyr-37–Val-61. Over Thr-62 to Asn-73 the chain is Cytoplasmic. Residues Tyr-74–Tyr-96 traverse the membrane as a helical segment. Residues Thr-97–Cys-110 lie on the Extracellular side of the membrane. Cys-110 and Cys-187 form a disulfide bridge. Residues Asn-111 to Ile-133 traverse the membrane as a helical segment. Positions Glu-134 to Trp-136 match the 'Ionic lock' involved in activated form stabilization motif. The Cytoplasmic segment spans residues Glu-134–His-152. A helical transmembrane segment spans residues Ala-153–Val-173. The Extracellular portion of the chain corresponds to Gly-174–Ser-202. A helical transmembrane segment spans residues Phe-203 to Gly-224. At Arg-225 to Arg-252 the chain is on the cytoplasmic side. Residues Met-253–Trp-274 traverse the membrane as a helical segment. The Extracellular segment spans residues Ile-275–Ile-286. The helical transmembrane segment at Phe-287 to Cys-308 threads the bilayer. The residue at position 296 (Lys-296) is an N6-(retinylidene)lysine. At Leu-309–Ala-352 the chain is on the cytoplasmic side. Residues Cys-322 and Cys-323 are each lipidated (S-palmitoyl cysteine). The interval Glu-331–Ala-352 is disordered. Positions Ala-334–Ala-352 are enriched in low complexity.

The protein belongs to the G-protein coupled receptor 1 family. Opsin subfamily. Phosphorylated on some or all of the serine and threonine residues present in the C-terminal region. Post-translationally, contains one covalently linked retinal chromophore.

It is found in the membrane. The protein localises to the cell projection. Its subcellular location is the cilium. The protein resides in the photoreceptor outer segment. In terms of biological role, photoreceptor required for image-forming vision at low light intensity. While most salt water fish species use retinal as chromophore, most freshwater fish use 3-dehydroretinal, or a mixture of retinal and 3-dehydroretinal. Light-induced isomerization of 11-cis to all-trans retinal triggers a conformational change that activates signaling via G-proteins. Subsequent receptor phosphorylation mediates displacement of the bound G-protein alpha subunit by arrestin and terminates signaling. This Psalidodon fasciatus (Banded astyanax) protein is Rhodopsin (rho).